Reading from the N-terminus, the 716-residue chain is Iron-sulfur clusters transporter atm1, mitochondrial (716 aa).

The N-terminal 18 residues, 1 to 18, are a transit peptide targeting the mitochondrion; that stretch reads MAPSIKLSTMATSLHRAH. Residues 19-123 are Mitochondrial matrix-facing; that stretch reads GTSALLRRPR…PKGSWGDKAR (105 aa). The segment at 57-87 is disordered; that stretch reads LFAPNGSAKDESKPAVSTVPKTTGRGPSDPL. Residues 124–145 form a helical membrane-spanning segment; the sequence is VLLAIGLLVGGKVLNVQVPFYF. In terms of domain architecture, ABC transmembrane type-1 spans 124–414; that stretch reads VLLAIGLLVG…LGSVYRELRQ (291 aa). Residues 146–168 are Mitochondrial intermembrane-facing; it reads REIVDSLNIDFSTTGGSVTAVAG. The helical transmembrane segment at 169–192 threads the bilayer; sequence AMILGYGAARVGAVVSQELRNAVF. The Mitochondrial matrix portion of the chain corresponds to 193 to 241; it reads ASVAQKAIRKVARNTFEHLLNLDLSFHLSKQTGGLTRAIDRGTKGISFL. A helical membrane pass occupies residues 242-265; sequence LTSMVFHIVPTALEISMVCGILTY. Position 266 (Asn266) is a topological domain, mitochondrial intermembrane. The helical transmembrane segment at 267-287 threads the bilayer; that stretch reads FGWQYAALTALTMVSYTAFTI. The Mitochondrial matrix portion of the chain corresponds to 288 to 353; the sequence is LTTAWRTKFR…NSIKVATSLA (66 aa). Glutathione-binding positions include 293-297 and 356-359; these read RTKFR and NSGQ. A helical transmembrane segment spans residues 354–372; sequence FLNSGQNIIFSSALTVMMY. The Mitochondrial intermembrane portion of the chain corresponds to 373–387; it reads MGAHGVATGQLTVGD. The chain crosses the membrane as a helical span at residues 388-409; the sequence is LVLINQLVFQLSVPLNFLGSVY. A glutathione-binding site is contributed by Gly406. The Mitochondrial matrix portion of the chain corresponds to 410–716; sequence RELRQSLLDM…KEEVGEKKEA (307 aa). The region spanning 449–690 is the ABC transporter domain; sequence IEFKDVTFGY…NGVYAQLWRA (242 aa). ATP is bound by residues Tyr458 and 482–493; that span reads GPSGCGKSTLLR. The disordered stretch occupies residues 697–716; that stretch reads EEGEVSKKGEKEEVGEKKEA. Basic and acidic residues predominate over residues 700 to 716; the sequence is EVSKKGEKEEVGEKKEA.

It belongs to the ABC transporter superfamily. ABCB family. Heavy Metal importer (TC 3.A.1.210) subfamily. As to quaternary structure, homodimer.

The protein localises to the mitochondrion inner membrane. Its function is as follows. Performs an essential function in the generation of cytoplasmic iron-sulfur proteins by mediating the ATP-dependent export of Fe/S cluster precursors synthesized by egt-3 and other mitochondrial proteins. Hydrolyzes ATP. Binds glutathione and may function by transporting a glutathione-conjugated iron-sulfur compound. This Neurospora crassa (strain ATCC 24698 / 74-OR23-1A / CBS 708.71 / DSM 1257 / FGSC 987) protein is Iron-sulfur clusters transporter atm1, mitochondrial.